A 373-amino-acid polypeptide reads, in one-letter code: Meiosis-specific kinetochore protein (373 aa).

2 disordered regions span residues 1–91 (MWPL…QDEK) and 250–276 (STPE…LTST). Positions 77–91 (SLQENRSSEDTQDEK) are enriched in basic and acidic residues. Residues 275 to 277 (STP) carry the POLO box domain (PBD)-binding motif. Residues 332–335 (EICC) are required for localization to kinetochores.

Interacts with CENPC. Interacts with PLK1; required for recruitment of PLK1 at kinetochores.

It localises to the chromosome. Its subcellular location is the centromere. It is found in the kinetochore. Key regulator of kinetochore function during meiosis I: required both for mono-orientation of kinetochores on sister chromosomes and protection of centromeric cohesin from separase-mediated cleavage. Acts by facilitating kinetochore mono-orientation during meiosis I, when kinetochores on sister chromosomes face the same direction and are thus captured and pulled by spindle fibers from the same pole. Also required to prevent cleavage of cohesin at centromeres during meiosis I, possibly by acting as a regulator of the shugoshin-dependent protection pathway. Acts in collaboration with PLK1: required for PLK1 enrichment to kinetochores. Not required during meiosis II or mitosis. The protein is Meiosis-specific kinetochore protein of Homo sapiens (Human).